The chain runs to 77 residues: Distinctin-like peptide (77 aa).

The signal sequence occupies residues leucine 1 to cysteine 19. A propeptide spanning residues glutamate 20–glutamate 39 is cleaved from the precursor.

The protein belongs to the frog skin active peptide (FSAP) family. In terms of tissue distribution, expressed by the skin glands.

It is found in the secreted. In terms of biological role, has antimicrobial activity. This is Distinctin-like peptide from Pithecopus azureus (Orange-legged monkey tree frog).